We begin with the raw amino-acid sequence, 427 residues long: Serine--tRNA ligase (427 aa).

Residue 232–234 (TAE) participates in L-serine binding. 263–265 (RSE) contacts ATP. Glu-286 contributes to the L-serine binding site. 350–353 (EISS) provides a ligand contact to ATP. Residue Ser-385 participates in L-serine binding.

The protein belongs to the class-II aminoacyl-tRNA synthetase family. Type-1 seryl-tRNA synthetase subfamily. As to quaternary structure, homodimer. The tRNA molecule binds across the dimer.

The protein localises to the cytoplasm. It carries out the reaction tRNA(Ser) + L-serine + ATP = L-seryl-tRNA(Ser) + AMP + diphosphate + H(+). The enzyme catalyses tRNA(Sec) + L-serine + ATP = L-seryl-tRNA(Sec) + AMP + diphosphate + H(+). The protein operates within aminoacyl-tRNA biosynthesis; selenocysteinyl-tRNA(Sec) biosynthesis; L-seryl-tRNA(Sec) from L-serine and tRNA(Sec): step 1/1. Its function is as follows. Catalyzes the attachment of serine to tRNA(Ser). Is also able to aminoacylate tRNA(Sec) with serine, to form the misacylated tRNA L-seryl-tRNA(Sec), which will be further converted into selenocysteinyl-tRNA(Sec). The protein is Serine--tRNA ligase of Aromatoleum aromaticum (strain DSM 19018 / LMG 30748 / EbN1) (Azoarcus sp. (strain EbN1)).